The sequence spans 338 residues: MKKVRKSFVLLLTGLLAVLILSACGQKTQQDIVAGLDEKAKEYTSYKAKAKMTIETGSEPQVYNVEIWHKKPSLYRVYLENPKKDQNQVILRNENGVFVLTPSLNKSFRFQSDWPNNSSQVYLFESLVKDVQNDSDAVFTAKEKKYVFETKTNYQHNKMLPTQEITFNKKDMSPSSVKVMDTDRKVMVKVEFSSFEFNKQFDKESFDEKKNMTLSQMDVATSAKPSDTFAVKTPLELPLGVKLLEEKDISTEDGKRIIMTYGGEKSFTLIQEKAQIAKASSSVTLNGEPVNLGYTIGALSDASLSWTYDGVDYLLSSKDLSKEEMVTVAKSMQGQSSK.

Residues 8-25 (FVLLLTGLLAVLILSACG) traverse the membrane as a helical segment.

The protein resides in the cell membrane. Its function is as follows. required for efficient sporulation. The polypeptide is Sporulation protein YdcC (ydcC) (Bacillus subtilis (strain 168)).